The sequence spans 78 residues: Large ribosomal subunit protein uL29 (78 aa).

Belongs to the universal ribosomal protein uL29 family.

The polypeptide is Large ribosomal subunit protein uL29 (Rippkaea orientalis (strain PCC 8801 / RF-1) (Cyanothece sp. (strain PCC 8801))).